Consider the following 145-residue polypeptide: Mitochondrial import receptor subunit TOM20 homolog (145 aa).

Residues 1 to 6 (MVGRNS) lie on the Mitochondrial intermembrane side of the membrane. Residues 7–24 (AIAAGVCGALFIGYCIYF) traverse the membrane as a helical segment. Over 25-145 (DRKRRSDPNF…AQSLAEDDVE (121 aa)) the chain is Cytoplasmic. Residues Lys35, Lys56, Lys61, and Lys68 each participate in a glycyl lysine isopeptide (Lys-Gly) (interchain with G-Cter in ubiquitin) cross-link. Phosphoserine occurs at positions 135 and 138.

This sequence belongs to the Tom20 family. Forms part of the preprotein translocase complex of the outer mitochondrial membrane (TOM complex) which consists of at least 7 different proteins (TOMM5, TOMM6, TOMM7, TOMM20, TOMM22, TOMM40 and TOMM70). Interacts with TOM22. Interacts with APEX1. Interacts with TBC1D21. Upon mitochondrial depolarization, interacts with PINK1; the interaction is required for PINK1-TOM-TIM23 supercomplex formation which is critical for PINK1 stabilization at the outer mitochondrial membrane, kinase activation and downstream mitophagy. Post-translationally, ubiquitinated by PRKN during mitophagy, leading to its degradation and enhancement of mitophagy. Deubiquitinated by USP30. As to expression, expressed in brain, kidney, stomach, colon, jejunum, ileum, testis, ovary and oviduct (at protein level). In the brain, expressed in neural cells of the cerebrum and cerebellum (at protein level). In the kidney, expressed in the proximal to distal tubule in the cortex and the outer and inner zones of the medulla (at protein level). In the stomach, expressed in the basal layer of stratified squamous epithelia in the forestomach and in the gastric pit and fundic gland of the glandular stomach (at protein level). Expressed in epithelial cells of the jejunum, ileum, and colon (at protein level). In the testis, expressed by spermatocytes and spermatogonia (at protein level). In the ovaries, expressed by follicular epithelial cells and corpus luteum cells (at protein level). In the oviduct, expressed in the epithelia of the isthmus and the ciliated cells of the ampulla (at protein level). Expressed in the sperm midpiece (at protein level).

It localises to the mitochondrion outer membrane. Central component of the receptor complex responsible for the recognition and translocation of cytosolically synthesized mitochondrial preproteins. Together with TOM22 functions as the transit peptide receptor at the surface of the mitochondrion outer membrane and facilitates the movement of preproteins into the TOM40 translocation pore. Required for the translocation across the mitochondrial outer membrane of cytochrome P450 monooxygenases. This is Mitochondrial import receptor subunit TOM20 homolog (Tomm20) from Mus musculus (Mouse).